The primary structure comprises 197 residues: GTP cyclohydrolase-2 (197 aa).

Residue 50–54 (RIHSE) coordinates GTP. Zn(2+) contacts are provided by cysteine 55, cysteine 66, and cysteine 68. Residues glutamine 71, 93 to 95 (EGR), and threonine 115 contribute to the GTP site. The active-site Proton acceptor is aspartate 127. The Nucleophile role is filled by arginine 129. The GTP site is built by threonine 150 and lysine 155.

It belongs to the GTP cyclohydrolase II family. Zn(2+) is required as a cofactor.

It carries out the reaction GTP + 4 H2O = 2,5-diamino-6-hydroxy-4-(5-phosphoribosylamino)-pyrimidine + formate + 2 phosphate + 3 H(+). The protein operates within cofactor biosynthesis; riboflavin biosynthesis; 5-amino-6-(D-ribitylamino)uracil from GTP: step 1/4. Its function is as follows. Catalyzes the conversion of GTP to 2,5-diamino-6-ribosylamino-4(3H)-pyrimidinone 5'-phosphate (DARP), formate and pyrophosphate. This Tolumonas auensis (strain DSM 9187 / NBRC 110442 / TA 4) protein is GTP cyclohydrolase-2.